The following is a 149-amino-acid chain: D-aminoacyl-tRNA deacylase (149 aa).

A Gly-cisPro motif, important for rejection of L-amino acids motif is present at residues 137 to 138 (GP).

This sequence belongs to the DTD family. Homodimer.

Its subcellular location is the cytoplasm. The enzyme catalyses glycyl-tRNA(Ala) + H2O = tRNA(Ala) + glycine + H(+). It carries out the reaction a D-aminoacyl-tRNA + H2O = a tRNA + a D-alpha-amino acid + H(+). In terms of biological role, an aminoacyl-tRNA editing enzyme that deacylates mischarged D-aminoacyl-tRNAs. Also deacylates mischarged glycyl-tRNA(Ala), protecting cells against glycine mischarging by AlaRS. Acts via tRNA-based rather than protein-based catalysis; rejects L-amino acids rather than detecting D-amino acids in the active site. By recycling D-aminoacyl-tRNA to D-amino acids and free tRNA molecules, this enzyme counteracts the toxicity associated with the formation of D-aminoacyl-tRNA entities in vivo and helps enforce protein L-homochirality. The chain is D-aminoacyl-tRNA deacylase from Anaeromyxobacter dehalogenans (strain 2CP-C).